Here is a 307-residue protein sequence, read N- to C-terminus: Nitrogenase iron protein 2 (307 aa).

13–20 (GKGGIGKS) contacts ATP. Cys-101 is a [4Fe-4S] cluster binding site. Position 104 is an ADP-ribosylarginine; by dinitrogenase reductase ADP-ribosyltransferase (Arg-104). Cys-135 is a binding site for [4Fe-4S] cluster. The tract at residues 285–307 (QLTETDKAAKESEKKQEDAEGEA) is disordered.

The protein belongs to the NifH/BchL/ChlL family. Homodimer. Requires [4Fe-4S] cluster as cofactor. In terms of processing, the reversible ADP-ribosylation of Arg-104 inactivates the nitrogenase reductase and regulates nitrogenase activity.

It carries out the reaction N2 + 8 reduced [2Fe-2S]-[ferredoxin] + 16 ATP + 16 H2O = H2 + 8 oxidized [2Fe-2S]-[ferredoxin] + 2 NH4(+) + 16 ADP + 16 phosphate + 6 H(+). The key enzymatic reactions in nitrogen fixation are catalyzed by the nitrogenase complex, which has 2 components: the iron protein and the molybdenum-iron protein. This chain is Nitrogenase iron protein 2 (nifH2), found in Mastigocladus laminosus (Fischerella sp.).